We begin with the raw amino-acid sequence, 262 residues long: Global transcriptional regulator CodY (262 aa).

Residues 1 to 159 (MATLLEKTRK…ATTVIGVQLS (159 aa)) form a GAF domain region. A DNA-binding region (H-T-H motif) is located at residues 207–226 (ASVIADKIGITRSVIVNALR).

The protein belongs to the CodY family.

It localises to the cytoplasm. DNA-binding global transcriptional regulator which is involved in the adaptive response to starvation and acts by directly or indirectly controlling the expression of numerous genes in response to nutrient availability. During rapid exponential growth, CodY is highly active and represses genes whose products allow adaptation to nutrient depletion. In Lactococcus lactis subsp. lactis (strain IL1403) (Streptococcus lactis), this protein is Global transcriptional regulator CodY.